A 358-amino-acid polypeptide reads, in one-letter code: tRNA-specific 2-thiouridylase MnmA (358 aa).

ATP-binding positions include 8-15 and leucine 34; that span reads GLSGGVDS. Cysteine 95 acts as the Nucleophile in catalysis. A disulfide bridge links cysteine 95 with cysteine 194. Glycine 120 contributes to the ATP binding site. Positions 144-146 are interaction with tRNA; it reads KDQ. Cysteine 194 serves as the catalytic Cysteine persulfide intermediate. The interval 299 to 300 is interaction with tRNA; the sequence is RY.

This sequence belongs to the MnmA/TRMU family.

The protein resides in the cytoplasm. The catalysed reaction is S-sulfanyl-L-cysteinyl-[protein] + uridine(34) in tRNA + AH2 + ATP = 2-thiouridine(34) in tRNA + L-cysteinyl-[protein] + A + AMP + diphosphate + H(+). In terms of biological role, catalyzes the 2-thiolation of uridine at the wobble position (U34) of tRNA, leading to the formation of s(2)U34. In Synechocystis sp. (strain ATCC 27184 / PCC 6803 / Kazusa), this protein is tRNA-specific 2-thiouridylase MnmA.